A 200-amino-acid polypeptide reads, in one-letter code: Small ribosomal subunit protein uS4 (200 aa).

Residues Met1–Arg13 are compositionally biased toward basic residues. The segment at Met1–Glu44 is disordered. The S4 RNA-binding domain occupies Ala92 to Asn154.

It belongs to the universal ribosomal protein uS4 family. As to quaternary structure, part of the 30S ribosomal subunit. Contacts protein S5. The interaction surface between S4 and S5 is involved in control of translational fidelity.

In terms of biological role, one of the primary rRNA binding proteins, it binds directly to 16S rRNA where it nucleates assembly of the body of the 30S subunit. Functionally, with S5 and S12 plays an important role in translational accuracy. The polypeptide is Small ribosomal subunit protein uS4 (Salinibacter ruber (strain DSM 13855 / M31)).